We begin with the raw amino-acid sequence, 184 residues long: Adenine phosphoribosyltransferase (184 aa).

This sequence belongs to the purine/pyrimidine phosphoribosyltransferase family. Homodimer.

Its subcellular location is the cytoplasm. The enzyme catalyses AMP + diphosphate = 5-phospho-alpha-D-ribose 1-diphosphate + adenine. It functions in the pathway purine metabolism; AMP biosynthesis via salvage pathway; AMP from adenine: step 1/1. In terms of biological role, catalyzes a salvage reaction resulting in the formation of AMP, that is energically less costly than de novo synthesis. The chain is Adenine phosphoribosyltransferase from Myxococcus xanthus (strain DK1622).